Consider the following 72-residue polypeptide: Conorfamide-Tx2 (72 aa).

A signal peptide spans 1–19; sequence MSGRGFLLLALLLLVTVEA. Positions 20–25 are excised as a propeptide; that stretch reads TRVEKK. Positions 32-39 are positively charged region crucial for activity against MRGPRX1 receptors; the sequence is AWSGPRNR. I43 bears the Isoleucine amide mark. A propeptide spanning residues 44-72 is cleaved from the precursor; sequence GRRDMQSPLLSERLRFRALGFRQPSSQKQ.

It belongs to the FARP (FMRFamide related peptide) family. In terms of tissue distribution, expressed by the venom duct.

It is found in the secreted. Functionally, this peptide activates human sensory neuron-specific G-protein coupled receptors MRGPRX1, but not mouse receptors (EC(50)=0.54 uM). Compared with the agonist chloroquine (anti-malaria drug), it is 600-fold more potent. In vivo, induces itch sensation, since intradermal cheek injection into humanized transgenic mouse (mouse MRGPRX1 replaced by human MRGPRX1) induces scratching. In vivo, treatment of zebrafish larvae with high doses (10 uM) induces hypoactivity at the beginning of the experiment during the dark phase and hyperactivity in the strobe phase after one hour, even after the removal of the toxin from the solution. This chain is Conorfamide-Tx2, found in Conus textile (Cloth-of-gold cone).